A 116-amino-acid polypeptide reads, in one-letter code: MKYSGYHLVIDLFGCNFDQLENTEYIIEMLKKLARALDTKIVAKAFHKFHPQGFSGALIISESHITIHTWPEDAYIGIDIFTCSKCFDPRKIVAYLKENLIFKKVEIKEILRGKID.

Residue Ser-63 is the Schiff-base intermediate with substrate; via pyruvic acid of the active site. Ser-63 is modified (pyruvic acid (Ser); by autocatalysis). The Proton acceptor; for processing activity role is filled by His-68. Residue Cys-83 is the Proton donor; for catalytic activity of the active site.

This sequence belongs to the prokaryotic AdoMetDC family. Type 1 subfamily. Heterotetramer of two alpha and two beta chains arranged as a dimer of alpha/beta heterodimers. The cofactor is pyruvate. Post-translationally, is synthesized initially as an inactive proenzyme. Formation of the active enzyme involves a self-maturation process in which the active site pyruvoyl group is generated from an internal serine residue via an autocatalytic post-translational modification. Two non-identical subunits are generated from the proenzyme in this reaction, and the pyruvate is formed at the N-terminus of the alpha chain, which is derived from the carboxyl end of the proenzyme. The post-translation cleavage follows an unusual pathway, termed non-hydrolytic serinolysis, in which the side chain hydroxyl group of the serine supplies its oxygen atom to form the C-terminus of the beta chain, while the remainder of the serine residue undergoes an oxidative deamination to produce ammonia and the pyruvoyl group blocking the N-terminus of the alpha chain.

The catalysed reaction is S-adenosyl-L-methionine + H(+) = S-adenosyl 3-(methylsulfanyl)propylamine + CO2. It participates in amine and polyamine biosynthesis; S-adenosylmethioninamine biosynthesis; S-adenosylmethioninamine from S-adenosyl-L-methionine: step 1/1. Functionally, catalyzes the decarboxylation of S-adenosylmethionine to S-adenosylmethioninamine (dcAdoMet), the propylamine donor required for the synthesis of the polyamines spermine and spermidine from the diamine putrescine. The polypeptide is S-adenosylmethionine decarboxylase proenzyme (Clostridium botulinum (strain ATCC 19397 / Type A)).